A 590-amino-acid chain; its full sequence is UvrABC system protein C (590 aa).

The GIY-YIG domain maps to 11–85; sequence ETPGVYLWKR…IKAHRPLYNV (75 aa). A UVR domain is found at 194-229; sequence DGLLQELEAKMREAARRLEFERAAEIRDQMEALRAF.

It belongs to the UvrC family. Interacts with UvrB in an incision complex.

The protein localises to the cytoplasm. Its function is as follows. The UvrABC repair system catalyzes the recognition and processing of DNA lesions. UvrC both incises the 5' and 3' sides of the lesion. The N-terminal half is responsible for the 3' incision and the C-terminal half is responsible for the 5' incision. The protein is UvrABC system protein C of Thermus thermophilus (strain ATCC 27634 / DSM 579 / HB8).